Reading from the N-terminus, the 144-residue chain is Large ribosomal subunit protein uL13 (144 aa).

Belongs to the universal ribosomal protein uL13 family. In terms of assembly, part of the 50S ribosomal subunit.

In terms of biological role, this protein is one of the early assembly proteins of the 50S ribosomal subunit, although it is not seen to bind rRNA by itself. It is important during the early stages of 50S assembly. The sequence is that of Large ribosomal subunit protein uL13 from Chloroflexus aurantiacus (strain ATCC 29366 / DSM 635 / J-10-fl).